The chain runs to 352 residues: Small ribosomal subunit biogenesis GTPase RsgA 2 (352 aa).

The CP-type G domain maps to 100–257 (RQDGQIIATN…VIDTPGMREL (158 aa)). GTP-binding positions include 147–150 (TKAD) and 199–207 (GSSGVGKST). Zn(2+) is bound by residues C278, C283, H285, and C291.

The protein belongs to the TRAFAC class YlqF/YawG GTPase family. RsgA subfamily. Monomer. Associates with 30S ribosomal subunit, binds 16S rRNA. Requires Zn(2+) as cofactor.

Its subcellular location is the cytoplasm. In terms of biological role, one of several proteins that assist in the late maturation steps of the functional core of the 30S ribosomal subunit. Helps release RbfA from mature subunits. May play a role in the assembly of ribosomal proteins into the subunit. Circularly permuted GTPase that catalyzes slow GTP hydrolysis, GTPase activity is stimulated by the 30S ribosomal subunit. The chain is Small ribosomal subunit biogenesis GTPase RsgA 2 from Lactiplantibacillus plantarum (strain ATCC BAA-793 / NCIMB 8826 / WCFS1) (Lactobacillus plantarum).